Reading from the N-terminus, the 292-residue chain is RNA 5'-monophosphate methyltransferase (292 aa).

The interval M1–S21 is disordered. S-adenosyl-L-methionine-binding positions include R46, N76, D110, D135–F136, and M164. Residues E53 to P274 enclose the Bin3-type SAM domain.

Belongs to the methyltransferase superfamily. As to quaternary structure, interacts with DICER1; the interaction may be mediated by RNA.

The protein localises to the cytoplasm. It catalyses the reaction a 5'-end 5'-phospho-ribonucleoside-RNA + S-adenosyl-L-methionine = a 5'-end (5'-methylphospho)-ribonucleoside-RNA + S-adenosyl-L-homocysteine. It carries out the reaction a 5'-end 5'-phospho-ribonucleoside-RNA + 2 S-adenosyl-L-methionine = a 5'-end (5'-bismethylphospho)-ribonucleoside-RNA + 2 S-adenosyl-L-homocysteine. In terms of biological role, O-methyltransferase that specifically monomethylates 5'-monophosphate of cytoplasmic histidyl tRNA (tRNA(His)), acting as a capping enzyme by protecting tRNA(His) from cleavage by DICER1. Also able, with less efficiently, to methylate the 5' monophosphate of a subset of pre-miRNAs, acting as a negative regulator of miRNA processing. The 5' monophosphate of pre-miRNAs is recognized by DICER1 and is required for pre-miRNAs processing: methylation at this position reduces the processing of pre-miRNAs by DICER1. Was also reported to mediate dimethylation of pre-miR-145; however dimethylation cannot be reproduced by another group which observes a monomethylation of pre-miR-145. In Homo sapiens (Human), this protein is RNA 5'-monophosphate methyltransferase.